The chain runs to 690 residues: MARLRVYELARKLNMSPKELLQELEELGVNVKSHMSYVDEEMANIIIDLLEEDNRKAKQPSKPKKEKGEEEVEKEVVEKKKKKKITLKPDELKLDIIAEKIGVPQNKIIQDMFVKRGIALRPGQILKLEEVEQILKEYKIEIEIEEEQQTSVEEVDEFELLEKRYQELYEKEKDKLVPRPPVVTVMGHVDHGKTTLLDRIRSTRVAEREEGGITQSIGAYQVEVNGKKITFIDTPGHELFTEMRARGAQATDIVVLVVAADDGVMPQTIEAYNHAKAANVPIIVAINKIDKPNANVEKTKQELVEKLGLIPEEWGGDTIVVPISARTGQGVDELLEMILLVAEMNEIKCYPEGPARAVIIESKLDKKMGPVASVIVKDGVLKVGDAVVASNTYGKVRNLFDDNMRPIREAYPSQPVMILGFEDVPDVHSNVYVVESVEKAKEIVEKRLQRLEAQKQSRKHINLEDLMKMMQEKEKKVLNLILKADTYGSVAALKNAINKLQSKEIELNIVHAGVGEISTSDVMLAAAVDGVILGFRVKVNNQARRLAEQEGVDVRTYSIIYKLVEDLKLALEGMLEPEEVEEVIGHGEIRKVFKISKVGKVAGVQMLDGKADRNGFVRIYRNGQLVFEGKIESLKHYKEDVNVVEAPQECGIKFAGFDDIQEGDELEFYVIRKVKRKPTFVEEQSDQEQK.

The tr-type G domain maps to 178-346 (PRPPVVTVMG…MILLVAEMNE (169 aa)). Residues 187–194 (GHVDHGKT) are G1. 187 to 194 (GHVDHGKT) provides a ligand contact to GTP. The tract at residues 212–216 (GITQS) is G2. The tract at residues 233 to 236 (DTPG) is G3. Residues 233–237 (DTPGH) and 287–290 (NKID) each bind GTP. A G4 region spans residues 287 to 290 (NKID). Positions 324–326 (SAR) are G5.

This sequence belongs to the TRAFAC class translation factor GTPase superfamily. Classic translation factor GTPase family. IF-2 subfamily.

It is found in the cytoplasm. One of the essential components for the initiation of protein synthesis. Protects formylmethionyl-tRNA from spontaneous hydrolysis and promotes its binding to the 30S ribosomal subunits. Also involved in the hydrolysis of GTP during the formation of the 70S ribosomal complex. This chain is Translation initiation factor IF-2, found in Thermotoga sp. (strain RQ2).